The chain runs to 59 residues: Large ribosomal subunit protein bL32 (59 aa).

Disordered stretches follow at residues 1–23 (MAVQ…DFLT) and 35–59 (EVHL…TKND). Over residues 49–59 (RGKKVVKTKND) the composition is skewed to basic residues.

Belongs to the bacterial ribosomal protein bL32 family.

The sequence is that of Large ribosomal subunit protein bL32 from Burkholderia ambifaria (strain MC40-6).